A 494-amino-acid polypeptide reads, in one-letter code: Probable cytochrome P450 313a4 (494 aa).

Cysteine 440 is a heme binding site.

The protein belongs to the cytochrome P450 family. Heme serves as cofactor.

It is found in the endoplasmic reticulum membrane. The protein resides in the microsome membrane. Functionally, may be involved in the metabolism of insect hormones and in the breakdown of synthetic insecticides. The sequence is that of Probable cytochrome P450 313a4 (Cyp313a4) from Drosophila melanogaster (Fruit fly).